The sequence spans 159 residues: Crossover junction endodeoxyribonuclease RuvC (159 aa).

Catalysis depends on residues Asp7, Glu67, and Asp139. Residues Asp7, Glu67, and Asp139 each contribute to the Mg(2+) site.

Belongs to the RuvC family. In terms of assembly, homodimer which binds Holliday junction (HJ) DNA. The HJ becomes 2-fold symmetrical on binding to RuvC with unstacked arms; it has a different conformation from HJ DNA in complex with RuvA. In the full resolvosome a probable DNA-RuvA(4)-RuvB(12)-RuvC(2) complex forms which resolves the HJ. It depends on Mg(2+) as a cofactor.

It is found in the cytoplasm. It carries out the reaction Endonucleolytic cleavage at a junction such as a reciprocal single-stranded crossover between two homologous DNA duplexes (Holliday junction).. In terms of biological role, the RuvA-RuvB-RuvC complex processes Holliday junction (HJ) DNA during genetic recombination and DNA repair. Endonuclease that resolves HJ intermediates. Cleaves cruciform DNA by making single-stranded nicks across the HJ at symmetrical positions within the homologous arms, yielding a 5'-phosphate and a 3'-hydroxyl group; requires a central core of homology in the junction. The consensus cleavage sequence is 5'-(A/T)TT(C/G)-3'. Cleavage occurs on the 3'-side of the TT dinucleotide at the point of strand exchange. HJ branch migration catalyzed by RuvA-RuvB allows RuvC to scan DNA until it finds its consensus sequence, where it cleaves and resolves the cruciform DNA. This is Crossover junction endodeoxyribonuclease RuvC from Orientia tsutsugamushi (strain Boryong) (Rickettsia tsutsugamushi).